The following is a 265-amino-acid chain: Undecaprenyl-diphosphatase (265 aa).

The next 7 helical transmembrane spans lie at 42–62 (ATTF…VLYW), 82–102 (GIML…AAHS), 108–128 (LFTP…MLLV), 143–163 (MSPA…WPGF), 181–201 (GLAA…ATGY), 221–241 (GFVV…ALVG), and 248–264 (FAWY…YFMA).

This sequence belongs to the UppP family.

The protein resides in the cell inner membrane. The catalysed reaction is di-trans,octa-cis-undecaprenyl diphosphate + H2O = di-trans,octa-cis-undecaprenyl phosphate + phosphate + H(+). In terms of biological role, catalyzes the dephosphorylation of undecaprenyl diphosphate (UPP). Confers resistance to bacitracin. The protein is Undecaprenyl-diphosphatase of Nitratidesulfovibrio vulgaris (strain ATCC 29579 / DSM 644 / CCUG 34227 / NCIMB 8303 / VKM B-1760 / Hildenborough) (Desulfovibrio vulgaris).